The primary structure comprises 163 residues: HTH-type transcriptional regulator IscR (163 aa).

Positions 2–131 (RLTSKGRYAV…NNITLGELVN (130 aa)) constitute an HTH rrf2-type domain. The segment at residues 28–51 (LADISERQGISLSYLEQLFSRLRK) is a DNA-binding region (H-T-H motif). Residues Cys-92, Cys-98, and Cys-104 each coordinate [2Fe-2S] cluster.

Requires [2Fe-2S] cluster as cofactor.

Functionally, regulates the transcription of several operons and genes involved in the biogenesis of Fe-S clusters and Fe-S-containing proteins. The chain is HTH-type transcriptional regulator IscR from Klebsiella pneumoniae (strain 342).